The primary structure comprises 332 residues: Methionyl-tRNA formyltransferase (332 aa).

124–127 (SLLP) contributes to the (6S)-5,6,7,8-tetrahydrofolate binding site.

This sequence belongs to the Fmt family.

The enzyme catalyses L-methionyl-tRNA(fMet) + (6R)-10-formyltetrahydrofolate = N-formyl-L-methionyl-tRNA(fMet) + (6S)-5,6,7,8-tetrahydrofolate + H(+). Functionally, attaches a formyl group to the free amino group of methionyl-tRNA(fMet). The formyl group appears to play a dual role in the initiator identity of N-formylmethionyl-tRNA by promoting its recognition by IF2 and preventing the misappropriation of this tRNA by the elongation apparatus. The protein is Methionyl-tRNA formyltransferase of Polynucleobacter necessarius subsp. necessarius (strain STIR1).